The chain runs to 76 residues: DNA-directed RNA polymerase subunit epsilon (76 aa).

It belongs to the RNA polymerase subunit epsilon family. RNAP is composed of a core of 2 alpha, a beta and a beta' subunit. The core is associated with a delta subunit, and at least one of epsilon or omega. When a sigma factor is associated with the core the holoenzyme is formed, which can initiate transcription.

The catalysed reaction is RNA(n) + a ribonucleoside 5'-triphosphate = RNA(n+1) + diphosphate. Functionally, a non-essential component of RNA polymerase (RNAP). The protein is DNA-directed RNA polymerase subunit epsilon of Streptococcus gordonii (strain Challis / ATCC 35105 / BCRC 15272 / CH1 / DL1 / V288).